The primary structure comprises 874 residues: Protein translocase subunit SecA (874 aa).

ATP is bound by residues Gln87, 105-109, and Asp512; that span reads GEGKT. Zn(2+) is bound by residues Cys859, Cys861, Cys870, and His871.

The protein belongs to the SecA family. In terms of assembly, monomer and homodimer. Part of the essential Sec protein translocation apparatus which comprises SecA, SecYEG and auxiliary proteins SecDF-YajC and YidC. Requires Zn(2+) as cofactor.

The protein localises to the cell inner membrane. It is found in the cytoplasm. It carries out the reaction ATP + H2O + cellular proteinSide 1 = ADP + phosphate + cellular proteinSide 2.. In terms of biological role, part of the Sec protein translocase complex. Interacts with the SecYEG preprotein conducting channel. Has a central role in coupling the hydrolysis of ATP to the transfer of proteins into and across the cell membrane, serving both as a receptor for the preprotein-SecB complex and as an ATP-driven molecular motor driving the stepwise translocation of polypeptide chains across the membrane. This chain is Protein translocase subunit SecA, found in Buchnera aphidicola subsp. Schizaphis graminum (strain Sg).